The primary structure comprises 207 residues: Ribonuclease HII (207 aa).

The RNase H type-2 domain occupies 18 to 207 (TYLSGSDEAG…PIKKISKETS (190 aa)). Asp-24, Glu-25, and Asp-116 together coordinate a divalent metal cation.

The protein belongs to the RNase HII family. It depends on Mn(2+) as a cofactor. The cofactor is Mg(2+).

Its subcellular location is the cytoplasm. The catalysed reaction is Endonucleolytic cleavage to 5'-phosphomonoester.. Endonuclease that specifically degrades the RNA of RNA-DNA hybrids. This Mycoplasma capricolum subsp. capricolum (strain California kid / ATCC 27343 / NCTC 10154) protein is Ribonuclease HII.